The sequence spans 539 residues: Netrin-G1 (539 aa).

The N-terminal stretch at 1-28 (MYLSRFLSIHALWVTVSSVMQPYPLVWG) is a signal peptide. Disulfide bonds link Cys33–Cys50, Cys72–Cys92, and Cys80–Cys88. A Laminin N-terminal domain is found at 46 to 296 (DYMACQPEST…AISDIKVRGR (251 aa)). An NGL discriminant loop I region spans residues 80-91 (CAMGNPYMCNNE). The N-linked (GlcNAc...) asparagine glycan is linked to Asn133. Cys182 and Cys206 are oxidised to a cystine. Residues 208-214 (EEYSTGY) form an NGL discriminant loop II region. Residues 273-275 (EIF) form an NGL discriminant loop III region. Cystine bridges form between Cys297–Cys306, Cys299–Cys315, Cys317–Cys326, Cys329–Cys354, Cys364–Cys373, Cys366–Cys384, Cys387–Cys396, Cys399–Cys417, Cys420–Cys432, Cys422–Cys438, Cys440–Cys449, Cys452–Cys462, Cys467–Cys480, Cys474–Cys486, and Cys488–Cys497. Laminin EGF-like domains are found at residues 297–356 (CKCN…TCIP), 364–419 (CECF…VCIE), and 420–469 (CYCN…VCDN). The N-linked (GlcNAc...) asparagine glycan is linked to Asn320. Residue Asn406 is glycosylated (N-linked (GlcNAc...) asparagine). Asn433 carries N-linked (GlcNAc...) asparagine glycosylation. Ser510 is lipidated: GPI-anchor amidated serine. A propeptide spans 511–539 (DSGQGAPPHGSPALLLLTTLLGTASPLVF) (removed in mature form).

As to quaternary structure, interacts with NGL1. Post-translationally, N-glycosylated. Highly expressed in the thalamus, with very low expression, if any, in other tissues.

The protein localises to the cell membrane. In terms of biological role, involved in controlling patterning and neuronal circuit formation at the laminar, cellular, subcellular and synaptic levels. Promotes neurite outgrowth of both axons and dendrites. The protein is Netrin-G1 (NTNG1) of Homo sapiens (Human).